The following is a 163-amino-acid chain: Ureidoglycolate lyase 2 (163 aa).

The protein belongs to the ureidoglycolate lyase family. Homodimer. The cofactor is Ni(2+).

The catalysed reaction is (S)-ureidoglycolate = urea + glyoxylate. It functions in the pathway nitrogen metabolism; (S)-allantoin degradation. Functionally, catalyzes the catabolism of the allantoin degradation intermediate (S)-ureidoglycolate, generating urea and glyoxylate. Involved in the utilization of allantoin as nitrogen source. This chain is Ureidoglycolate lyase 2, found in Rhizobium meliloti (strain 1021) (Ensifer meliloti).